The following is a 393-amino-acid chain: Phosphopentomutase (393 aa).

Residues Asp-11, Asp-282, His-287, Asp-323, His-324, and His-335 each contribute to the Mn(2+) site.

Belongs to the phosphopentomutase family. Mn(2+) serves as cofactor.

It localises to the cytoplasm. The catalysed reaction is 2-deoxy-alpha-D-ribose 1-phosphate = 2-deoxy-D-ribose 5-phosphate. It carries out the reaction alpha-D-ribose 1-phosphate = D-ribose 5-phosphate. Its pathway is carbohydrate degradation; 2-deoxy-D-ribose 1-phosphate degradation; D-glyceraldehyde 3-phosphate and acetaldehyde from 2-deoxy-alpha-D-ribose 1-phosphate: step 1/2. Functionally, isomerase that catalyzes the conversion of deoxy-ribose 1-phosphate (dRib-1-P) and ribose 1-phosphate (Rib-1-P) to deoxy-ribose 5-phosphate (dRib-5-P) and ribose 5-phosphate (Rib-5-P), respectively. This chain is Phosphopentomutase, found in Caldanaerobacter subterraneus subsp. tengcongensis (strain DSM 15242 / JCM 11007 / NBRC 100824 / MB4) (Thermoanaerobacter tengcongensis).